The sequence spans 400 residues: Phosphoglycerate kinase (400 aa).

Substrate is bound by residues 24–26, Arg40, 63–66, Arg121, and Arg154; these read DFN and HFGR. Residues Lys205, Gly296, Glu327, and 356 to 359 contribute to the ATP site; that span reads GGDS.

In terms of assembly, monomer.

The protein resides in the cytoplasm. It carries out the reaction (2R)-3-phosphoglycerate + ATP = (2R)-3-phospho-glyceroyl phosphate + ADP. The protein operates within carbohydrate degradation; glycolysis; pyruvate from D-glyceraldehyde 3-phosphate: step 2/5. The polypeptide is Phosphoglycerate kinase (Nostoc sp. (strain PCC 7120 / SAG 25.82 / UTEX 2576)).